Here is a 177-residue protein sequence, read N- to C-terminus: Large ribosomal subunit protein uL6 (177 aa).

This sequence belongs to the universal ribosomal protein uL6 family. As to quaternary structure, part of the 50S ribosomal subunit.

This protein binds to the 23S rRNA, and is important in its secondary structure. It is located near the subunit interface in the base of the L7/L12 stalk, and near the tRNA binding site of the peptidyltransferase center. The protein is Large ribosomal subunit protein uL6 of Rhizobium etli (strain ATCC 51251 / DSM 11541 / JCM 21823 / NBRC 15573 / CFN 42).